Here is a 51-residue protein sequence, read N- to C-terminus: Insulin (51 aa).

Cystine bridges form between C8-C37, C20-C50, and C36-C41.

It belongs to the insulin family. In terms of assembly, heterodimer of a B chain and an A chain linked by two disulfide bonds.

It is found in the secreted. Insulin decreases blood glucose concentration. It increases cell permeability to monosaccharides, amino acids and fatty acids. It accelerates glycolysis, the pentose phosphate cycle, and glycogen synthesis in liver. The polypeptide is Insulin (Seriola quinqueradiata (Five-ray yellowtail)).